A 348-amino-acid polypeptide reads, in one-letter code: MASGEDGPRSCMVCGDRATGYHFHALTCEGCKGFFRRTVSKNTGLTCPFAGSCKVNKAQRRHCPACRLQKCLDAGMKKEMILSAEALAQRRAKQAQRRAQWAAVQLSKGQQELVQTLLGAHARHVGTMFDQFVQFRPPAHLFIHHQRLPIPLPPLPLLEHFAEVNTFMVQQVIKFTKDLPLFRSLPMEDQISLLKGAAVEICHIALNTTFCLQTRNFLCGPLRYTLEDGVHVGFQEEFLELLFRFHATLRRFQLQEPEYVLMAAMALFSPDRPGVTQKEEIDRLQEMMALTLQSYIKGQPPRHRDRFLYAKLLGLLAELRSINNAYGYQIQHIQGLSAMMPLLQEICS.

Positions 8–83 form a DNA-binding region, nuclear receptor; sequence PRSCMVCGDR…AGMKKEMILS (76 aa). Residues 11–31 form an NR C4-type zinc finger; the sequence is CMVCGDRATGYHFHALTCEGC. A Phosphothreonine; by PKC modification is found at Thr-38. An NR C4-type zinc finger spans residues 47 to 71; it reads CPFAGSCKVNKAQRRHCPACRLQKC. In terms of domain architecture, NR LBD spans 109-348; the sequence is GQQELVQTLL…MMPLLQEICS (240 aa).

This sequence belongs to the nuclear hormone receptor family. NR1 subfamily. In terms of assembly, heterodimer of NR1I3 and RXR. Interacts with PSMC4. Interacts with ECT2. Directly interacts with DNAJC7; this complex may also include HSP90. Interacts with CRY1. Interacts with CRY2 in a ligand-dependent manner. In terms of processing, phosphorylated at Thr-38 by PKC, dephosphorylation of Thr-38 is required for nuclear translocation and activation.

It localises to the nucleus. Its subcellular location is the cytoplasm. The protein resides in the cytoskeleton. Its function is as follows. Binds and transactivates the retinoic acid response elements that control expression of the retinoic acid receptor beta 2 and alcohol dehydrogenase 3 genes. Transactivates both the phenobarbital responsive element module of the human CYP2B6 gene and the CYP3A4 xenobiotic response element. In Pusa sibirica (Baikal seal), this protein is Nuclear receptor subfamily 1 group I member 3 (NR1I3).